A 121-amino-acid chain; its full sequence is Chorion protein S15 (121 aa).

The signal sequence occupies residues 1-18 (MKYLFVCVSLALFAYISA).

Belongs to the chorion protein S15/S18 family.

The protein localises to the secreted. Functionally, chorion membrane (egg shell) protein; plays a role in protecting the egg from the environment. The chain is Chorion protein S15 (Cp15) from Drosophila subobscura (Fruit fly).